Here is a 225-residue protein sequence, read N- to C-terminus: MSSHTPVVTVDGPSGAGKGTLCMLLAKKLGFQLLDSGAIYRVLALAALHHGVDLESEDALVPLATHLDVQFIAEGDLVKVILEGEDVSRELRKEETGMAASKVAALPRVREALLRRQRAFASGIGLVADGRDMGTVVFPAAEAKIFLDASAEERARRRFKQLQLKGLDVKFDALLSEIQERDDRDRNRAVAPLRPAEDALVLDSTTLTIDEVVEQALQYIESKLV.

12–20 (GPSGAGKGT) is an ATP binding site.

It belongs to the cytidylate kinase family. Type 1 subfamily.

The protein localises to the cytoplasm. The enzyme catalyses CMP + ATP = CDP + ADP. The catalysed reaction is dCMP + ATP = dCDP + ADP. The sequence is that of Cytidylate kinase from Vibrio cholerae serotype O1 (strain ATCC 39315 / El Tor Inaba N16961).